Reading from the N-terminus, the 576-residue chain is MKNFKAKIITAKQNVMEKTAKRENTLEPDEMKELEKKTTETKDFLRKLTKSVEKETLSSGVSIQDGTELADNFLDYSVHVRDNQSDLVILSGILSKIGEFQAGFEDLKSKLNSSLINDVSDPLKSIIKTELKQAKESKREYDRVRVAFDAHLSELANLRKQKNVKPPKIQESEEECERLRTNFERVGIDTTCLLRDTNVITEFETVEKLCDYLDSYHTFFQKGYRWLAQMIPDIYEYRLYVEKRKAELEKSKVRISMMVSPQKQQADSLSKTKCFGEDLSVLLNREGSTLPWFIVRAFQAIRNHIATEEGLFRLSGTKRIIYEYKQKIDEGKEYNLSEILDIHVVCNLVKLYLRELQPEPLLTYSRYNELIDTCNIEDQNQRVDKISKILSSLPKHYYTLLHHLIHLLSQIASQPKSKMGPANLATVIGPNILICQTDVVLEDIALGNMVVTTIIQNFDRIFGGPPLLQQSVPDTYVPPPNNTRNNSVNNFNNVQPSSFSASTSRSINLNKSTNNPNINDDNNNNNNINNSDDEPYDPNAPPIYSGVPMRGNIKHSDSCSTLGDSFDEGDAVELSD.

A coiled-coil region spans residues 123-189 (LKSIIKTELK…RTNFERVGID (67 aa)). The Rho-GAP domain maps to 277-462 (EDLSVLLNRE…TIIQNFDRIF (186 aa)). The disordered stretch occupies residues 472-576 (VPDTYVPPPN…DEGDAVELSD (105 aa)). Residues 482-500 (NTRNNSVNNFNNVQPSSFS) show a composition bias toward low complexity. Residues 501-513 (ASTSRSINLNKST) show a composition bias toward polar residues. A compositionally biased stretch (low complexity) spans 514 to 530 (NNPNINDDNNNNNNINN). Acidic residues predominate over residues 565-576 (SFDEGDAVELSD).

It localises to the cytoplasm. Rho GTPase-activating protein involved in the signal transduction pathway. In Dictyostelium discoideum (Social amoeba), this protein is Rho GTPase-activating protein gacP (gacP).